The sequence spans 318 residues: Lysophospholipase D GDPD3 (318 aa).

The Cytoplasmic segment spans residues 1 to 2 (MS). Residues 3–23 (LLLYYALPALGSYAMLSIFFL) form a helical membrane-spanning segment. The Extracellular portion of the chain corresponds to 24 to 198 (RRPHLLHTPR…KAANPEMPLS (175 aa)). The GP-PDE domain occupies 39–308 (IRLGAHRGGS…DYPTALRHYL (270 aa)). A divalent metal cation-binding residues include Glu71, Asp73, and His86. A helical membrane pass occupies residues 199–221 (FTISRGFWVLLSYYLGLLPFIPI). The Cytoplasmic portion of the chain corresponds to 222–318 (PEKFFFCFLP…DNHGPAARTS (97 aa)).

Belongs to the glycerophosphoryl diester phosphodiesterase family. As to expression, widely expressed, with high level in kidney and ovary.

It localises to the membrane. The protein resides in the cytoplasm. The protein localises to the perinuclear region. It is found in the endoplasmic reticulum. It carries out the reaction 1-hexadecanoyl-sn-glycero-3-phosphocholine + H2O = 1-hexadecanoyl-sn-glycero-3-phosphate + choline + H(+). The catalysed reaction is 1-hexadecanoyl-sn-glycero-3-phosphocholine + H2O = sn-glycerol 3-phosphocholine + hexadecanoate + H(+). It catalyses the reaction 1-O-(1Z-octadecenyl)-sn-glycero-3-phospho-N-hexadecanoyl-ethanolamine + H2O = 1-O-(1Z-octadecenyl)-sn-glycero-3-phosphate + N-hexadecanoylethanolamine + H(+). The enzyme catalyses N-(5Z,8Z,11Z,14Z-eicosatetraenoyl)-1-(9Z-octadecenoyl)-sn-glycero-3-phosphoethanolamine + H2O = N-(5Z,8Z,11Z,14Z-eicosatetraenoyl)-ethanolamine + 1-(9Z-octadecenoyl)-sn-glycero-3-phosphate + H(+). It carries out the reaction N,1-di-(9Z-octadecenoyl)-sn-glycero-3-phosphoethanolamine + H2O = N-(9Z-octadecenoyl) ethanolamine + 1-(9Z-octadecenoyl)-sn-glycero-3-phosphate + H(+). The catalysed reaction is N-hexadecanoyl-1-(9Z-octadecenoyl)-sn-glycero-3-phosphoethanolamine + H2O = N-hexadecanoylethanolamine + 1-(9Z-octadecenoyl)-sn-glycero-3-phosphate + H(+). It catalyses the reaction 1-O-hexadecyl-sn-glycero-3-phosphocholine + H2O = 1-O-hexadecyl-sn-glycero-3-phosphate + choline + H(+). Lysophospholipase D activity is stimulated by calcium. Loss of lysophospholipase D activity in presence of EDTA. Functionally, hydrolyzes lysoglycerophospholipids to produce lysophosphatidic acid (LPA) and the corresponding amines. Shows a preference for 1-O-alkyl-sn-glycero-3-phosphocholine (lyso-PAF), lysophosphatidylcholine (lyso-PC) and N-acylethanolamine lysophospholipids. Does not display glycerophosphodiester phosphodiesterase activity, since it cannot hydrolyze either glycerophosphoinositol or glycerophosphocholine. The sequence is that of Lysophospholipase D GDPD3 from Homo sapiens (Human).